We begin with the raw amino-acid sequence, 423 residues long: MATPMAEDSNFEDDQLHAMSTEDIIRASRLLDNEIRIIKEELQRTNLELDSFKEKIKENQEKIKLNKQLPYLVGNIVEILEMNPEEEAEEDGANIDLDSQRKGKCVVLKTSTRQTIFLPVVGLVDPDNLKPGDLVGVNKDSYLILDTLPSEYDSRVKAMEVDEKPTEDYHDIGGLEKQIQELVEAIVLPMTHQERFQKLGVRPPKGVLLYGPPGTGKTLMARACAAQTNATFLKLAGPQLVQMFIGDGAKLVRDAFQLAKEKSPCIIFIDEIDAIGTKRFDSEVSGDREVQRTMLELLNQLDGFSSDDRIKVIAATNRADILDPALMRSGRLDRKIEFPHPTEEARARILQIHSRKMNVNPDVNFEELARSTDDFNGAQLKAVCVEAGMLALRRDATEVTHEDFNEGIIQVQAKKKASLNYYA.

G211–T218 lines the ATP pocket.

The protein belongs to the AAA ATPase family.

The protein resides in the cytoplasm. It is found in the nucleus. Its function is as follows. The 26S proteasome is involved in the ATP-dependent degradation of ubiquitinated proteins. The regulatory (or ATPase) complex confers ATP dependency and substrate specificity to the 26S complex. The polypeptide is 26S proteasome regulatory subunit 6A homolog (TBP1) (Solanum lycopersicum (Tomato)).